We begin with the raw amino-acid sequence, 54 residues long: Potassium channel toxin alpha-KTx 14.5 (54 aa).

An N-terminal signal peptide occupies residues 1-23 (MKIFFAILLILAVCSMAIWTVNG). 3 disulfides stabilise this stretch: cysteine 30/cysteine 46, cysteine 36/cysteine 51, and cysteine 40/cysteine 53.

The protein belongs to the short scorpion toxin superfamily. Potassium channel inhibitor family. Alpha-KTx 14 subfamily. Expressed by the venom gland.

It is found in the secreted. Functionally, inhibits potassium channels. May be active towards small conductance calcium-activated potassium channels (KCNN, SK), and less active towards voltage-gated potassium channels (Kv/KCN). This is Potassium channel toxin alpha-KTx 14.5 from Mesobuthus gibbosus (Mediterranean checkered scorpion).